We begin with the raw amino-acid sequence, 171 residues long: Shikimate kinase (171 aa).

Position 14–19 (14–19 (GAGKST)) interacts with ATP. A Mg(2+)-binding site is contributed by serine 18. Substrate-binding residues include aspartate 36, arginine 60, and glycine 82. Arginine 120 lines the ATP pocket. Arginine 139 contributes to the substrate binding site. Glutamine 156 lines the ATP pocket.

The protein belongs to the shikimate kinase family. Monomer. The cofactor is Mg(2+).

The protein resides in the cytoplasm. It carries out the reaction shikimate + ATP = 3-phosphoshikimate + ADP + H(+). The protein operates within metabolic intermediate biosynthesis; chorismate biosynthesis; chorismate from D-erythrose 4-phosphate and phosphoenolpyruvate: step 5/7. Catalyzes the specific phosphorylation of the 3-hydroxyl group of shikimic acid using ATP as a cosubstrate. The polypeptide is Shikimate kinase (Shewanella loihica (strain ATCC BAA-1088 / PV-4)).